The primary structure comprises 66 residues: Large ribosomal subunit protein bL33c (66 aa).

It belongs to the bacterial ribosomal protein bL33 family.

The protein resides in the plastid. The protein localises to the chloroplast. The sequence is that of Large ribosomal subunit protein bL33c from Morus indica (Mulberry).